The sequence spans 65 residues: Subtilisin inhibitor CLSI-I (65 aa).

Belongs to the protease inhibitor I13 (potato type I serine protease inhibitor) family.

Functionally, inhibits subtilisin-type microbial serine proteases including proteinase K, subtilisin BPN', subtilisin Carlsberg, subtilisin E, A.oryzae protease and S.griseus alkaline protease. Weakly inhibits pronase E. Does not inhibit trypsin or chymotrypsin. This Canavalia lineata (Beach bean) protein is Subtilisin inhibitor CLSI-I.